A 383-amino-acid polypeptide reads, in one-letter code: 1-deoxy-D-xylulose 5-phosphate reductoisomerase (383 aa).

NADPH is bound by residues Thr-10, Gly-11, Ser-12, Ile-13, Gly-36, Lys-37, Asn-38, and Asn-122. Residue Lys-123 participates in 1-deoxy-D-xylulose 5-phosphate binding. NADPH is bound at residue Glu-124. Asp-148 contacts Mn(2+). 1-deoxy-D-xylulose 5-phosphate contacts are provided by Ser-149, Glu-150, Ser-174, and His-197. Residue Glu-150 coordinates Mn(2+). Residue Gly-203 coordinates NADPH. Ser-210, Asn-215, Lys-216, and Glu-219 together coordinate 1-deoxy-D-xylulose 5-phosphate. Glu-219 lines the Mn(2+) pocket.

It belongs to the DXR family. The cofactor is Mg(2+). It depends on Mn(2+) as a cofactor.

It catalyses the reaction 2-C-methyl-D-erythritol 4-phosphate + NADP(+) = 1-deoxy-D-xylulose 5-phosphate + NADPH + H(+). It participates in isoprenoid biosynthesis; isopentenyl diphosphate biosynthesis via DXP pathway; isopentenyl diphosphate from 1-deoxy-D-xylulose 5-phosphate: step 1/6. Its function is as follows. Catalyzes the NADPH-dependent rearrangement and reduction of 1-deoxy-D-xylulose-5-phosphate (DXP) to 2-C-methyl-D-erythritol 4-phosphate (MEP). The sequence is that of 1-deoxy-D-xylulose 5-phosphate reductoisomerase from Bacillus licheniformis (strain ATCC 14580 / DSM 13 / JCM 2505 / CCUG 7422 / NBRC 12200 / NCIMB 9375 / NCTC 10341 / NRRL NRS-1264 / Gibson 46).